The sequence spans 478 residues: Aspartyl/glutamyl-tRNA(Asn/Gln) amidotransferase subunit B (478 aa).

This sequence belongs to the GatB/GatE family. GatB subfamily. In terms of assembly, heterotrimer of A, B and C subunits.

The catalysed reaction is L-glutamyl-tRNA(Gln) + L-glutamine + ATP + H2O = L-glutaminyl-tRNA(Gln) + L-glutamate + ADP + phosphate + H(+). It carries out the reaction L-aspartyl-tRNA(Asn) + L-glutamine + ATP + H2O = L-asparaginyl-tRNA(Asn) + L-glutamate + ADP + phosphate + 2 H(+). Functionally, allows the formation of correctly charged Asn-tRNA(Asn) or Gln-tRNA(Gln) through the transamidation of misacylated Asp-tRNA(Asn) or Glu-tRNA(Gln) in organisms which lack either or both of asparaginyl-tRNA or glutaminyl-tRNA synthetases. The reaction takes place in the presence of glutamine and ATP through an activated phospho-Asp-tRNA(Asn) or phospho-Glu-tRNA(Gln). The protein is Aspartyl/glutamyl-tRNA(Asn/Gln) amidotransferase subunit B of Lachnoclostridium phytofermentans (strain ATCC 700394 / DSM 18823 / ISDg) (Clostridium phytofermentans).